Consider the following 364-residue polypeptide: Transcription factor IIIA (364 aa).

C2H2-type zinc fingers lie at residues 38-62 (FICSFPDCSASYNKAWKLDAHLCKH), 68-92 (FVCDYEGCGKAFIRDYHLSRHVLIH), 98-123 (FVCADDGCNQKFNTKSNLKKHIERKH), 130-154 (YVCSYEGCKKAFKKHQQLRTHQCQH), 160-184 (FRCTHEGCGKHFASPSRLKRHGKVH), 187-211 (YLCQKGCSFMGKTWTELLKHMREAH), 215-237 (ITCNVCQRMFKRRDYLKQHMKTH), 244-269 (YRCPRQGCGRTYTTVFNLQSHILSFH), and 275-299 (FVCEHAGCGKTFAMKQSLMRHSVVH). The interval 299-364 (HDPDKKRMKL…PPPAALLTVC (66 aa)) is disordered. Positions 338 to 352 (SLPNASAESSSSPEA) are enriched in low complexity.

Its subcellular location is the nucleus. In terms of biological role, involved in ribosomal large subunit biogenesis. Binds the approximately 50 base pairs internal control region (ICR) of 5S ribosomal RNA genes. It is required for their RNA polymerase III-dependent transcription and may also maintain the transcription of other genes. Also binds the transcribed 5S RNA's. The chain is Transcription factor IIIA (Gtf3a) from Mus musculus (Mouse).